The primary structure comprises 560 residues: Formate--tetrahydrofolate ligase (560 aa).

69–76 (TPAGEGKS) contributes to the ATP binding site.

Belongs to the formate--tetrahydrofolate ligase family.

It carries out the reaction (6S)-5,6,7,8-tetrahydrofolate + formate + ATP = (6R)-10-formyltetrahydrofolate + ADP + phosphate. Its pathway is one-carbon metabolism; tetrahydrofolate interconversion. The chain is Formate--tetrahydrofolate ligase from Listeria welshimeri serovar 6b (strain ATCC 35897 / DSM 20650 / CCUG 15529 / CIP 8149 / NCTC 11857 / SLCC 5334 / V8).